Consider the following 306-residue polypeptide: Curved DNA-binding protein (306 aa).

Positions 5–69 (DYYAIMGVKP…QRRAEYDQMW (65 aa)) constitute a J domain.

The protein resides in the cytoplasm. The protein localises to the nucleoid. DNA-binding protein that preferentially recognizes a curved DNA sequence. It is probably a functional analog of DnaJ; displays overlapping activities with DnaJ, but functions under different conditions, probably acting as a molecular chaperone in an adaptive response to environmental stresses other than heat shock. Lacks autonomous chaperone activity; binds native substrates and targets them for recognition by DnaK. Its activity is inhibited by the binding of CbpM. This Escherichia coli (strain 55989 / EAEC) protein is Curved DNA-binding protein.